The chain runs to 182 residues: Large ribosomal subunit protein uL16 (182 aa).

The segment at 140-182 (EKPTQVGKAPPKSSFLPSDETETAAAQAGTEASSASSVTPLES) is disordered. A compositionally biased stretch (low complexity) spans 162 to 176 (TAAAQAGTEASSASS).

It belongs to the universal ribosomal protein uL16 family. As to quaternary structure, part of the 50S ribosomal subunit.

Functionally, binds 23S rRNA and is also seen to make contacts with the A and possibly P site tRNAs. The polypeptide is Large ribosomal subunit protein uL16 (Prochlorococcus marinus (strain SARG / CCMP1375 / SS120)).